A 194-amino-acid polypeptide reads, in one-letter code: Small ribosomal subunit protein uS7 (194 aa).

Belongs to the universal ribosomal protein uS7 family. Part of the 30S ribosomal subunit.

Functionally, one of the primary rRNA binding proteins, it binds directly to 16S rRNA where it nucleates assembly of the head domain of the 30S subunit. Is located at the subunit interface close to the decoding center. This chain is Small ribosomal subunit protein uS7, found in Methanocorpusculum labreanum (strain ATCC 43576 / DSM 4855 / Z).